Consider the following 689-residue polypeptide: Glycine--tRNA ligase beta subunit (689 aa).

It belongs to the class-II aminoacyl-tRNA synthetase family. Tetramer of two alpha and two beta subunits.

Its subcellular location is the cytoplasm. It catalyses the reaction tRNA(Gly) + glycine + ATP = glycyl-tRNA(Gly) + AMP + diphosphate. The chain is Glycine--tRNA ligase beta subunit from Mannheimia succiniciproducens (strain KCTC 0769BP / MBEL55E).